We begin with the raw amino-acid sequence, 504 residues long: L-carnitine/gamma-butyrobetaine antiporter (504 aa).

12 helical membrane passes run 10-30 (IEPK…WLTV), 51-71 (WGWA…WLVF), 92-112 (IFMM…SIEI), 143-163 (GPLP…FFFV), 195-215 (FYLV…TPLV), 231-251 (LDAI…ACGL), 263-283 (SYLS…SFIM), 316-336 (WTVF…IFLA), 347-367 (LCFG…TVLG), 398-418 (WAAL…CFIA), 446-466 (LLVR…LLAL), and 475-495 (AIIA…LSFI).

Belongs to the BCCT transporter (TC 2.A.15) family. CaiT subfamily. As to quaternary structure, homotrimer.

The protein localises to the cell inner membrane. The catalysed reaction is 4-(trimethylamino)butanoate(in) + (R)-carnitine(out) = 4-(trimethylamino)butanoate(out) + (R)-carnitine(in). Its pathway is amine and polyamine metabolism; carnitine metabolism. Its function is as follows. Catalyzes the exchange of L-carnitine for gamma-butyrobetaine. This Escherichia coli (strain K12 / MC4100 / BW2952) protein is L-carnitine/gamma-butyrobetaine antiporter.